The chain runs to 354 residues: Protein RecA (354 aa).

Residue 67 to 74 (GPESSGKT) participates in ATP binding.

It belongs to the RecA family.

Its subcellular location is the cytoplasm. In terms of biological role, can catalyze the hydrolysis of ATP in the presence of single-stranded DNA, the ATP-dependent uptake of single-stranded DNA by duplex DNA, and the ATP-dependent hybridization of homologous single-stranded DNAs. It interacts with LexA causing its activation and leading to its autocatalytic cleavage. This chain is Protein RecA, found in Chlamydia muridarum (strain MoPn / Nigg).